The following is a 466-amino-acid chain: MKSVSIIDIIEKKIFKKKLVEINGWVRTKRNSKLGISFVDVYDGSCLQHIQVIAKKDLSNYKSDILRLTSGCSVKIFGVLKKSLKNSKIYELHATCIKVLGWIKDPGKYPISSKPHTLEYLRSFSHLRPRTNIIGSVSRIRNIIFQEVHNFLNKKGFIWVPSPIITSLNTEGSGEMFKVSTFDFKKIPLNKNKLINYRKDFFGKRTFLTVSGQLHIESYACSLSKVYTFGPTFRAENSNTSRHLAEFWMVEIEIAFAKLNDIILLAYNLLSNIFKKVLNKCLNDLIFLEKKLNINIIKKLKNFIEKKLIEVEYCEAIRILKNCEKNFRIQLKWGMDLSSEHERYLSDLYYKSHIVIKNYPKEIKAFYMRLNKDKKTVAAADILLPGIGEIIGGSEREDRLEYLDSMIKEKRLIHKNYEWYRDLRKYGTVPHSGFGLGIERLISYVTGLKNIRDVIPFPRSSKNASF.

Belongs to the class-II aminoacyl-tRNA synthetase family. As to quaternary structure, homodimer.

Its subcellular location is the cytoplasm. It catalyses the reaction tRNA(Asn) + L-asparagine + ATP = L-asparaginyl-tRNA(Asn) + AMP + diphosphate + H(+). This is Asparagine--tRNA ligase from Wigglesworthia glossinidia brevipalpis.